We begin with the raw amino-acid sequence, 247 residues long: MAGHSKWANTKHRKAAQDSKRGKIFTKIIRELVTAARLGGGDPGSNPRLRAAIDKALSNNMTRDTLNRAIARGVGGDDDTNMETIIYEGYGPGGTAVMVECLSDNRNRTVSEVRHAFTKTGGNLGTDGSVSYLFTKKGVISYAPGLDEDTVMNAALEAGADDVVTYDDGAIDVFTPWETFGDVKDALDAAGLKAESAEVSMIPSTKADMDAETAPKLMRLIDMLEDCDDVQEVYHNGEISDEVAELL.

It belongs to the TACO1 family.

The protein resides in the cytoplasm. This is Probable transcriptional regulatory protein ECA2494 from Pectobacterium atrosepticum (strain SCRI 1043 / ATCC BAA-672) (Erwinia carotovora subsp. atroseptica).